The following is a 957-amino-acid chain: Leucine--tRNA ligase (957 aa).

The 'HIGH' region motif lies at 66-77 (PYPSGAGLHVGH). Positions 728-732 (KMGKS) match the 'KMSKS' region motif. Residue K731 coordinates ATP.

This sequence belongs to the class-I aminoacyl-tRNA synthetase family.

It localises to the cytoplasm. It catalyses the reaction tRNA(Leu) + L-leucine + ATP = L-leucyl-tRNA(Leu) + AMP + diphosphate. The sequence is that of Leucine--tRNA ligase from Streptomyces griseus subsp. griseus (strain JCM 4626 / CBS 651.72 / NBRC 13350 / KCC S-0626 / ISP 5235).